Reading from the N-terminus, the 594-residue chain is Golgi-associated RAB2 interactor protein 4 (594 aa).

The segment at 387-524 (MDAAAGPPVS…TSSGSSKGLG (138 aa)) is disordered. The segment covering 396–406 (STRQSKSSLSG) has biased composition (polar residues). 3 stretches are compositionally biased toward basic and acidic residues: residues 408-433 (HGRE…DRAL), 442-455 (TGES…DKIA), and 468-477 (ANRDDKKEKG). Polar residues predominate over residues 511-520 (SLWTTSSGSS).

Belongs to the GARIN family. In terms of assembly, interacts (via N-terminus) with RAB2B (in GTP-bound form).

The protein resides in the golgi apparatus. RAB2B effector protein required for the compacted Golgi morphology, probably through interaction with small GTPase RAB2B. This is Golgi-associated RAB2 interactor protein 4 from Homo sapiens (Human).